A 1506-amino-acid polypeptide reads, in one-letter code: Transient receptor potential cation channel subfamily M member 2 (1506 aa).

A compositionally biased stretch (basic and acidic residues) spans 1 to 11; it reads MESLDRRRTGS. The disordered stretch occupies residues 1 to 22; it reads MESLDRRRTGSEQEEGFGVQSR. The Cytoplasmic portion of the chain corresponds to 1–750; the sequence is MESLDRRRTG…WWGQLCVDNG (750 aa). Thr-173, Asn-178, Arg-301, Gly-332, and Thr-335 together coordinate ADP-D-ribose. A Phosphothreonine modification is found at Thr-738. Residues 751–767 lie within the membrane without spanning it; that stretch reads LWRIILCMLAFPLLFTG. Residues 768-792 are Cytoplasmic-facing; sequence FISFREKRLQALCRPARVRAFFNAP. Residues 793-813 traverse the membrane as a helical segment; the sequence is VVIFHMNILSYFAFLCLFAYV. Residues 814-824 are Extracellular-facing; sequence LMVDFQPSPSW. A helical transmembrane segment spans residues 825 to 845; it reads CEYLIYLWLFSLVCEETRQLF. 2 residues coordinate Ca(2+): Glu-840 and Gln-843. Over 846 to 864 the chain is Cytoplasmic; the sequence is YDPDGCGLMKMASLYFSDF. A helical transmembrane segment spans residues 865–885; that stretch reads WNKLDVGAILLFIVGLTCRLI. A Ca(2+)-binding site is contributed by Asn-866. Residues 886-893 are Extracellular-facing; it reads PATLYPGR. A helical transmembrane segment spans residues 894–914; that stretch reads IILSLDFIMFCLRLMHIFTIS. At 915–926 the chain is on the cytoplasmic side; the sequence is KTLGPKIIIVKR. The helical transmembrane segment at 927 to 947 threads the bilayer; it reads MMKDVFFFLFLLAVWVVSFGV. Topologically, residues 948–967 are extracellular; that stretch reads AKQAILIHNESRVDWIFRGV. The segment at residues 968–982 is an intramembrane region (pore-forming); it reads VYHSYLTIFGQIPTY. Positions 976-979 match the Selectivity filter motif; that stretch reads FGQI. Residues 983–1019 lie on the Extracellular side of the membrane; the sequence is IDGVNFSMDQCSPNGTDPYKPKCPESDWTGQAPAFPE. Cys-993 and Cys-1005 are joined by a disulfide. The chain crosses the membrane as a helical span at residues 1020-1041; that stretch reads WLTVTLLCLYLLFANILLLNLL. Residues 1042–1076 are Cytoplasmic-facing; it reads IAMFNYTFQEVQEHTDQIWKFQRHDLIEEYHGRPP. Residue Glu-1070 participates in Ca(2+) binding. The stretch at 1077-1095 is an intramembrane region; the sequence is APPPLILLSHLQLLIKRIV. Residues 1096-1506 are Cytoplasmic-facing; sequence LKIPAKRHKQ…KVASLFGAHF (411 aa). The Nudix hydrolase domain occupies 1350 to 1501; the sequence is RWKRNQGGAI…KTILQKVASL (152 aa). Residue Ser-1378 participates in ADP-D-ribose binding. The Nudix box motif lies at 1386 to 1407; it reads GSREPGEMLPRKLKRVLRQEFW. Positions 1427, 1429, 1488, and 1490 each coordinate ADP-D-ribose.

Belongs to the transient receptor (TC 1.A.4) family. LTrpC subfamily. TRPM2 sub-subfamily. In terms of assembly, homotetramer. Protein kinase C (PKC)-mediated phosphorylation of TRPM2 at Thr-738 counteracts the effect of cytosolic Ca(2+) and elevates the temperature threshold. As to expression, detected in the preoptic area of the hypothalamus, a brain area involved in body temperature control. Detected in beta-cells in pancreas islets (at protein level). Detected in brain cortex, striatum, hippocampus CA1, CA2 and CA3 layers, and in the Purkinje cell layer in cerebellum. Widely expressed, with highest levels in lung, spleen, eye and brain. Detected in dendritic cells and in polymorphonuclear neutrophils.

It is found in the cell membrane. The protein resides in the perikaryon. The protein localises to the cell projection. It localises to the cytoplasmic vesicle. Its subcellular location is the lysosome. The catalysed reaction is Ca(2+)(in) = Ca(2+)(out). It carries out the reaction Na(+)(in) = Na(+)(out). Activated by intracellular ADP-ribose, beta-NAD (NAD(+)) and similar compounds, and by oxidative stress caused by reactive oxygen or nitrogen species. Ca(2+) and PI(4,5)P2 are required for channel opening by ADP-ribose. Activated by moderate heat (35 to 40 degrees Celsius). Activation by ADP-ribose and beta-NAD is strongly increased by moderate heat (35 to 40 degrees Celsius). Likewise, reactive oxygen species lower the threshold for activation by moderate heat (37 degrees Celsius). Inactivated by exposure to extracellular pH between 4.0 and 6.5; irreversibly inactivated when open channels are exposed to extracellular pH between 4.0 and 6.5, while pre-exposure of closed channels to extracellular pH 5.5 gives rise to currents that rapidly inactivate, but protects against irreversible inactivation. Inactivated by intracellular ATP. Activated by arachidonic acid. Inhibited by 2-aminoethyl diphenylborinate (2-APB). In terms of biological role, nonselective, voltage-independent cation channel that mediates Na(+) and Ca(2+) influx, leading to increased cytoplasmic Ca(2+) levels. Functions as a ligand-gated ion channel, gated by intracellular adenosine diphosphate ribose (ADP-ribose), Ca(2+), warm temperature, and oxidative stress. The precise physiological activators are under debate; the true, physiological activators may be ADP-ribose and ADP-ribose-2'-phosphate. Binding of ADP-ribose to the cytoplasmic Nudix domain causes a conformation change; the channel is primed but still requires Ca(2+) binding to trigger channel opening. Extracellular Ca(2+) passes through the channel and increases channel activity. Also contributes to Ca(2+) release from intracellular stores in response to ADP-ribose. Plays a role in numerous processes that involve signaling via intracellular Ca(2+) levels. Besides, mediates the release of lysosomal Zn(2+) stores in response to reactive oxygen species, leading to increased cytosolic Zn(2+) levels. Plays a role in mediating behavorial and physiological responses to moderate heat and thereby contributes to body temperature homeostasis. Plays a role in insulin secretion, a process that requires increased cytoplasmic Ca(2+) levels. Required for normal IFNG and cytokine secretion and normal innate immune immunity in response to bacterial infection. Required for normal phagocytosis and cytokine release by macrophages exposed to zymosan (in vitro). Plays a role in dendritic cell differentiation and maturation, and in dendritic cell chemotaxis via its role in regulating cytoplasmic Ca(2+) levels. Plays a role in the regulation of the reorganization of the actin cytoskeleton and filopodia formation in response to reactive oxygen species via its function in increasing cytoplasmic Ca(2+) and Zn(2+) levels. Confers susceptibility to cell death following oxidative stress. This Mus musculus (Mouse) protein is Transient receptor potential cation channel subfamily M member 2 (Trpm2).